The following is a 289-amino-acid chain: Elongation factor Ts (289 aa).

Residues 82–85 (TDFV) form an involved in Mg(2+) ion dislocation from EF-Tu region.

This sequence belongs to the EF-Ts family.

Its subcellular location is the cytoplasm. Its function is as follows. Associates with the EF-Tu.GDP complex and induces the exchange of GDP to GTP. It remains bound to the aminoacyl-tRNA.EF-Tu.GTP complex up to the GTP hydrolysis stage on the ribosome. In Chloroherpeton thalassium (strain ATCC 35110 / GB-78), this protein is Elongation factor Ts.